Consider the following 224-residue polypeptide: 7-cyano-7-deazaguanine synthase (224 aa).

12–22 (LSGGLDSSTVT) is an ATP binding site. C193, C201, C204, and C207 together coordinate Zn(2+).

The protein belongs to the QueC family. The cofactor is Zn(2+).

The enzyme catalyses 7-carboxy-7-deazaguanine + NH4(+) + ATP = 7-cyano-7-deazaguanine + ADP + phosphate + H2O + H(+). The protein operates within purine metabolism; 7-cyano-7-deazaguanine biosynthesis. In terms of biological role, catalyzes the ATP-dependent conversion of 7-carboxy-7-deazaguanine (CDG) to 7-cyano-7-deazaguanine (preQ(0)). The protein is 7-cyano-7-deazaguanine synthase of Prochlorococcus marinus (strain MIT 9312).